A 4963-amino-acid chain; its full sequence is Kettin homolog (4963 aa).

3 consecutive Ig-like domains span residues 18 to 105, 133 to 220, and 303 to 392; these read PTFI…TCIL, PSAP…EAIS, and PIIR…ARIE. 5 disordered regions span residues 396–420, 466–501, 557–578, 598–622, and 652–696; these read LSVP…QQQQ, RRQL…EEER, IRPH…RQEV, QLYQ…QQRF, and TNGG…GHEH. Composition is skewed to basic and acidic residues over residues 399-417, 466-475, and 484-501; these read PDER…RDRQ, RRQLEHEKRL, and FERE…EEER. Positions 401–517 form a coiled coil; sequence ERRKENQLRE…KHLRQQQQTQ (117 aa). Over residues 557–576 the composition is skewed to low complexity; the sequence is IRPHQQQQQHYQQQQQSPRQ. A compositionally biased stretch (low complexity) spans 658 to 685; that stretch reads AANGSAKTANGSANGSANGSAVHAANGG. Ig-like domains follow at residues 706–796, 806–893, 937–1027, 1065–1155, 1199–1281, 1462–1554, 1594–1687, 1728–1819, 1992–2085, 2126–2217, 2258–2350, 2391–2481, 2522–2613, 2654–2745, 2787–2878, 2919–3010, 3051–3141, 3182–3273, 3314–3407, and 3448–3539; these read PQFL…FSLN, PEFT…GRVV, PKFE…ANIA, PNFH…ATII, FHCE…AELT, PKFL…ITVT, PPTF…ATIR, PAFV…VDIN, PPVF…IFLE, PTFT…CTVK, PKFV…ANFT, PQFI…AQLT, PKFV…GQLS, PSFV…ANVG, PQWV…ATVT, PNFL…ASIR, PAIT…ATLK, PRFI…ATIE, PAIV…FEVS, and PVFI…TKLT. A disulfide bridge links Cys-827 with Cys-877. Cysteines 1201 and 1265 form a disulfide. A disulfide bond links Cys-1618 and Cys-1671. 2 disulfides stabilise this stretch: Cys-2016/Cys-2069 and Cys-2148/Cys-2201. Basic and acidic residues predominate over residues 3567–3583; sequence EAPRPAREDAPDADHGP. Residues 3567-3590 are disordered; that stretch reads EAPRPAREDAPDADHGPPKFTSAL. Ig-like domains follow at residues 3584-3677, 3720-3811, 3821-3913, 3962-4052, and 4098-4185; these read PKFT…LKVV, PSFS…GKIA, PQVV…TKIT, PEFR…AKLA, and PQFT…ATLD. 2 disulfides stabilise this stretch: Cys-3606-Cys-3659 and Cys-3742-Cys-3795. Residues 4193-4963 form a required for F-actin binding region; that stretch reads RQTKLRPANF…TSQAKLTLSR (771 aa). Positions 4319–4329 are enriched in basic and acidic residues; sequence DQQEVGWERPD. Residues 4319–4357 are disordered; it reads DQQEVGWERPDWAGQDGTSKLPGADEGRFKKLPTPAPEL. Ig-like domains lie at 4546–4634, 4645–4733, 4752–4842, and 4872–4960; these read PTIS…ANLT, PDFS…ARLN, PRFT…LVLT, and PHFI…AKLT.

Interacts (via Ig-like domains) with F-actin. As to expression, expressed in the pharyngeal, body wall, and anal depressor muscles. Expression in these muscles is higher in hermaphrodites than in males. Expressed in the vulva and the myoepithelial sheath of the proximal ovary. Expressed in the proximal gonad of males. Not expressed in the dense bodies of the obliquely striated body wall muscle.

Its subcellular location is the cytoplasm. The protein resides in the myofibril. The protein localises to the sarcomere. It is found in the cytoskeleton. Functionally, positively regulates actin filament organization and provides mechanical stability to the myofibrils during body wall muscle contraction. Required for the organization of sarcomeric actin filaments and myosin protein myo-3 in striated body wall muscle cells. Not required for assembly of dense bodies, which are a type of integrin-based adhesion structure that link the plasma membrane to thin filaments of myofibrils, in body wall muscle. Not required for the atn-1 protein to localize to the dense bodies. The chain is Kettin homolog from Caenorhabditis elegans.